The sequence spans 353 residues: Dimethylsulfoniopropionate lyase 2 (353 aa).

Catalysis depends on proton donor/acceptor residues cysteine 125 and cysteine 274. The segment at aspartate 326–glutamine 353 is disordered. Residues aspartate 331 to proline 346 show a composition bias toward basic and acidic residues.

This sequence belongs to the aspartate/glutamate racemases family. ALMA1 subfamily. Homotetramer.

It carries out the reaction S,S-dimethyl-beta-propiothetin = acrylate + dimethyl sulfide + H(+). Its function is as follows. Mediates cleavage of dimethylsulfoniopropionate (DMSP) into dimethyl sulfide (DMS) and acrylate. DMS is the principal form by which sulfur is transported from oceans to the atmosphere and is a key component of the ocean sulfur cycle. This is Dimethylsulfoniopropionate lyase 2 from Emiliania huxleyi (strain CCMP1516).